A 923-amino-acid chain; its full sequence is MDGSDSLLKSVDVSKLDNGSTISFRAREDGFLESISSSSGKLVDMVLDSTSKECLPKFSFQNKLDFYFLFSDRVLQLQKERKVLVLIHCESLQSFDSFFAQKLKYADLISSDNVHEIFLPDSNAANIRYHWEWSPPSGKLLEYECKNYSCIAVYSTEDCTLERISKFSYYTVSRCGDSMDDTFFSESQRVTSPLTTSQTVQTQPPQSPEAKTELSLINTKTVIFPENYEDGPSFRSMLHELEQKSSLMKYYCKKIMKRIVQLSDAYDASQVAVMKLSETLSEASNSTSMNMDILLDSYLTKAMDIHATFIQKLNYDLINLLYEPFHNIYSSFIKPIDDRRLEFDEQSKSFYGSLSRYLSAKKDKKGGDSKFFQKEKTFALQRYDYYCFMQDLHDGSIINDINGIFLQYFHRQYDHIALFSNLMNSVLPNLQQLNLKLEKTKWSTTRRDKGREMHRSQVIQTSGRPKSMAPPSPSPISPSFPLHEIQSPMPNRRMAASADDISQTSNFTTEIKGKCISNGGSASPDKIFKEGLLLVFGATELGTDLAMVSKAAWHKHWIVVENGSLWEYANWKDSVKSNVSSISLKHASADKVRKQGRRFCFEVVTPKLKRLYQATSAEEMDSWIEAICEAAKISSFQLSRVATPLSASVRRPSKVFPLFSTSFETTPISRKLSGSGIKKAFSRKGSWNLQQFFRSDNSGTMHMEQLERYHASANIFIQMLRKTDVSNSVCADCGSVKDVTWCSINIPVVLCIECSGIHRSLGTHISKTRSLLLDSLSQQSKVLLCKIGNAAVNRVYEKGLSNPSLKPKPEHNAQVKLAFAQKKYVEHAFIDFAGVDADATLLEGLEQNKISKILLGLAAKPNFEENGVVFLKAVTRDTSKLHLLELLFMNGLLLPDSEQLSEHVSPDMQSYLSQKQFTKYLKE.

Serine 207 is modified (phosphoserine). The segment covering 444-455 has biased composition (basic and acidic residues); sequence TTRRDKGREMHR. A disordered region spans residues 444 to 476; sequence TTRRDKGREMHRSQVIQTSGRPKSMAPPSPSPI. The 107-residue stretch at 526-632 folds into the PH domain; the sequence is KIFKEGLLLV…WIEAICEAAK (107 aa). The Arf-GAP domain occupies 714 to 837; the sequence is NIFIQMLRKT…AFIDFAGVDA (124 aa). The C4-type zinc-finger motif lies at 730–754; the sequence is CADCGSVKDVTWCSINIPVVLCIEC.

The protein localises to the cytoplasm. Its subcellular location is the cell tip. In terms of biological role, GTPase-activating protein for the ADP ribosylation factor family. The protein is Probable ribosylation factor GTPase-activating protein cnt6 (cnt6) of Schizosaccharomyces pombe (strain 972 / ATCC 24843) (Fission yeast).